The following is a 196-amino-acid chain: Protein GrpE (196 aa).

The interval 1-40 (MSSKEQKTPEGQAPEEIIMDQHEEVEAVEPNDSAEQVDPR) is disordered.

Belongs to the GrpE family. As to quaternary structure, homodimer.

The protein localises to the cytoplasm. Functionally, participates actively in the response to hyperosmotic and heat shock by preventing the aggregation of stress-denatured proteins, in association with DnaK and GrpE. It is the nucleotide exchange factor for DnaK and may function as a thermosensor. Unfolded proteins bind initially to DnaJ; upon interaction with the DnaJ-bound protein, DnaK hydrolyzes its bound ATP, resulting in the formation of a stable complex. GrpE releases ADP from DnaK; ATP binding to DnaK triggers the release of the substrate protein, thus completing the reaction cycle. Several rounds of ATP-dependent interactions between DnaJ, DnaK and GrpE are required for fully efficient folding. The protein is Protein GrpE of Salmonella enteritidis PT4 (strain P125109).